Consider the following 461-residue polypeptide: MSLDLDWNLLDDQLSDRFLETINRALEASASKRPSFIGDIQFEKLDFGSDSPDVAIRSITDIWPDFVSIDEPPLRRRGARQTTPASNATTLVESPTDSFGVHHGGVGEIPLRTYTQFDDAAPPNRIHGPPSVVSASVAGSGPMTPAAAAGVANVFSQQWSTALASRGIRAAGMGSATSLPQTQVTSPVDSVPPSPGYFQHWQQHQQLATTGFVPYSVINSRQTSLDASSLRGGGSGPQSSVSQIGVKRDSNSLHPPLGGTYANGLGPRASMRATSAPSFRSISGQNSPGEEREAVASPSSASQLPSLQMRLSLVWPTTTFRLTITTSLLINYPSAAFMSLPLTLSVTGFMMRCGVIVALEGEHQRAHVCLVQEQDDERDPAFVSAGQAAAGSEKKLNSAGINILPQLTFESEVGQHEKHVLKNVGKVEKFIAEVIRKGLEDELVYPNYYTIDLPASKRHSL.

Positions 1-454 constitute an SMP-LTD domain; it reads MSLDLDWNLL…YPNYYTIDLP (454 aa). Disordered regions lie at residues 75 to 104 and 226 to 301; these read RRRG…VHHG and DASS…PSSA. 2 stretches are compositionally biased toward polar residues: residues 80–97 and 272–288; these read RQTT…SPTD and RATS…QNSP.

It belongs to the MDM12 family. In terms of assembly, component of the ER-mitochondria encounter structure (ERMES) or MDM complex, composed of MMM1, MDM10, MDM12 and MDM34. An MMM1 homodimer associates with one molecule of MDM12 on each side in a pairwise head-to-tail manner, and the SMP-LTD domains of MMM1 and MDM12 generate a continuous hydrophobic tunnel for phospholipid trafficking.

The protein resides in the mitochondrion outer membrane. The protein localises to the endoplasmic reticulum membrane. Component of the ERMES/MDM complex, which serves as a molecular tether to connect the endoplasmic reticulum (ER) and mitochondria. Components of this complex are involved in the control of mitochondrial shape and protein biogenesis, and function in nonvesicular lipid trafficking between the ER and mitochondria. MDM12 is required for the interaction of the ER-resident membrane protein MMM1 and the outer mitochondrial membrane-resident beta-barrel protein MDM10. The MDM12-MMM1 subcomplex functions in the major beta-barrel assembly pathway that is responsible for biogenesis of all mitochondrial outer membrane beta-barrel proteins, and acts in a late step after the SAM complex. The MDM10-MDM12-MMM1 subcomplex further acts in the TOM40-specific pathway after the action of the MDM12-MMM1 complex. Essential for establishing and maintaining the structure of mitochondria and maintenance of mtDNA nucleoids. The chain is Mitochondrial distribution and morphology protein 12 from Mycosarcoma maydis (Corn smut fungus).